Here is a 528-residue protein sequence, read N- to C-terminus: Protein spinster homolog 1 (528 aa).

The disordered stretch occupies residues 1 to 38 (MAGSDTAPFLSQADDPDDGPAPGHPGLPGPMGNPKSGE). A2 bears the N-acetylalanine mark. 12 helical membrane passes run 60 to 80 (LIVV…FTVA), 98 to 118 (GLIQ…FGYL), 126 to 146 (YLMC…SFIP), 160 to 180 (VGVG…DLFV), 187 to 207 (MLSI…IAGS), 218 to 238 (WALR…FLVV), 278 to 298 (LGFT…PAFL), 323 to 343 (LIFG…GVEI), 357 to 377 (LVCA…LACA), 381 to 401 (IVAT…NWAI), 421 to 441 (FQIV…IGLI), and 465 to 485 (MLCA…AMFI). S518 is subject to Phosphoserine.

The protein belongs to the major facilitator superfamily. Spinster (TC 2.A.1.49) family. As to quaternary structure, interacts with BCL2 and BCL2L1.

It is found in the lysosome membrane. The enzyme catalyses a 1-acyl-sn-glycero-3-phosphocholine(out) + H(+)(out) = a 1-acyl-sn-glycero-3-phosphocholine(in) + H(+)(in). The catalysed reaction is 1-hexadecanoyl-sn-glycero-3-phosphocholine(out) + H(+)(out) = 1-hexadecanoyl-sn-glycero-3-phosphocholine(in) + H(+)(in). It catalyses the reaction 1-(9Z-octadecenoyl)-sn-glycero-3-phosphocholine(out) + H(+)(out) = 1-(9Z-octadecenoyl)-sn-glycero-3-phosphocholine(in) + H(+)(in). It carries out the reaction 1-(5Z,8Z,11Z,14Z-eicosatetraenoyl)-sn-glycero-3-phosphocholine(out) + H(+)(out) = 1-(5Z,8Z,11Z,14Z-eicosatetraenoyl)-sn-glycero-3-phosphocholine(in) + H(+)(in). The enzyme catalyses 1-(4Z,7Z,10Z,13Z,16Z,19Z-docosahexaenoyl)-sn-glycero-3-phosphocholine(out) + H(+)(out) = 1-(4Z,7Z,10Z,13Z,16Z,19Z-docosahexaenoyl)-sn-glycero-3-phosphocholine(in) + H(+)(in). The catalysed reaction is a 1-acyl-sn-glycero-3-phosphoethanolamine(out) + H(+)(out) = a 1-acyl-sn-glycero-3-phosphoethanolamine(in) + H(+)(in). It catalyses the reaction 1-(9Z-octadecenoyl)-sn-glycero-3-phosphoethanolamine(out) + H(+)(out) = 1-(9Z-octadecenoyl)-sn-glycero-3-phosphoethanolamine(in) + H(+)(in). It carries out the reaction 1-acyl-sn-glycero-3-phospho-(1'-sn-glycerol)(out) + H(+)(out) = 1-acyl-sn-glycero-3-phospho-(1'-sn-glycerol)(in) + H(+)(in). The enzyme catalyses 1-(9Z-octadecenoyl)-sn-glycero-3-phospho-(1'-sn-glycerol)(out) + H(+)(out) = 1-(9Z-octadecenoyl)-sn-glycero-3-phospho-(1'-sn-glycerol)(in) + H(+)(in). The catalysed reaction is a 1-O-(1Z-alkenyl)-sn-glycero-3-phosphocholine(out) + H(+)(out) = a 1-O-(1Z-alkenyl)-sn-glycero-3-phosphocholine(in) + H(+)(in). It catalyses the reaction 1-(1Z-hexadecenyl)-sn-glycero-3-phosphocholine(out) + H(+)(out) = 1-(1Z-hexadecenyl)-sn-glycero-3-phosphocholine(in) + H(+)(in). It carries out the reaction a 1-O-(1Z-alkenyl)-sn-glycero-3-phosphoethanolamine(out) + H(+)(out) = a 1-O-(1Z-alkenyl)-sn-glycero-3-phosphoethanolamine(in) + H(+)(in). The enzyme catalyses 1-O-(1Z-hexadecenyl)-sn-glycero-3-phosphoethanolamine(out) + H(+)(out) = 1-O-(1Z-hexadecenyl)-sn-glycero-3-phosphoethanolamine(in) + H(+)(in). Functionally, plays a critical role in the phospholipid salvage pathway from lysosomes to the cytosol. Mediates the rate-limiting, proton-dependent, lysosomal efflux of lysophospholipids, which can then be reacylated by acyltransferases in the endoplasmic reticulum to form phospholipids. Selective for zwitterionic headgroups such as lysophosphatidylcholine (LPC) and lysophosphatidylethanolamine (LPE), can also transport lysophosphatidylglycerol (LPG), but not other anionic lysophospholipids, sphingosine, nor sphingomyelin. Transports lysophospholipids with saturated, monounsaturated, and polyunsaturated fatty acids, such as 1-hexadecanoyl-sn-glycero-3-phosphocholine, 1-(9Z-octadecenoyl)-sn-glycero-3-phosphocholine and 1-(4Z,7Z,10Z,13Z,16Z,19Z-docosahexaenoyl)-sn-glycero-3-phosphocholine, respectively. Can also transport lysoplasmalogen (LPC with a fatty alcohol) such as 1-(1Z-hexadecenyl)-sn-glycero-3-phosphocholine. Essential player in lysosomal homeostasis. Crucial for cell survival under conditions of nutrient limitation. May be involved in necrotic or autophagic cell death. The protein is Protein spinster homolog 1 (Spns1) of Rattus norvegicus (Rat).